The chain runs to 119 residues: Immunoglobulin lambda variable 4-69 (119 aa).

The N-terminal stretch at Met-1 to Ser-20 is a signal peptide. The framework-1 stretch occupies residues Gln-21–Ser-45. In terms of domain architecture, Ig-like spans Gln-21–Ile-119. Cysteines 42 and 112 form a disulfide. Residues Ser-46–Ala-52 are complementarity-determining-1. The interval Ile-53–Lys-69 is framework-2. Residues Leu-70–His-76 form a complementarity-determining-2 region. Residues Asp-73–Gly-92 form a disordered region. Positions Ser-77–Cys-112 are framework-3. Residues Gln-113–Ile-119 form a complementarity-determining-3 region.

As to quaternary structure, immunoglobulins are composed of two identical heavy chains and two identical light chains; disulfide-linked.

The protein resides in the secreted. The protein localises to the cell membrane. V region of the variable domain of immunoglobulin light chains that participates in the antigen recognition. Immunoglobulins, also known as antibodies, are membrane-bound or secreted glycoproteins produced by B lymphocytes. In the recognition phase of humoral immunity, the membrane-bound immunoglobulins serve as receptors which, upon binding of a specific antigen, trigger the clonal expansion and differentiation of B lymphocytes into immunoglobulins-secreting plasma cells. Secreted immunoglobulins mediate the effector phase of humoral immunity, which results in the elimination of bound antigens. The antigen binding site is formed by the variable domain of one heavy chain, together with that of its associated light chain. Thus, each immunoglobulin has two antigen binding sites with remarkable affinity for a particular antigen. The variable domains are assembled by a process called V-(D)-J rearrangement and can then be subjected to somatic hypermutations which, after exposure to antigen and selection, allow affinity maturation for a particular antigen. This chain is Immunoglobulin lambda variable 4-69, found in Homo sapiens (Human).